The chain runs to 339 residues: BTB/POZ domain-containing protein KCTD9 (339 aa).

Residues 3–82 (RVTLFLNGSP…PQTDARPPGG (80 aa)) enclose the KHA domain. Residue S11 is modified to Phosphoserine. The region spanning 89-161 (DWLTLNVGGR…LRHGQLIVND (73 aa)) is the BTB domain. 3 Pentapeptide repeat domains span residues 223–247 (ANLQ…NFED), 253–292 (ANLE…NLRG), and 293–327 (ATLA…IFEE).

As to quaternary structure, forms pentamers. Component of a complex mades of five KCTD9 and five CUL3 subunits.

Its pathway is protein modification; protein ubiquitination. Functionally, substrate-specific adapter of a BCR (BTB-CUL3-RBX1) E3 ubiquitin-protein ligase complex, which mediates the ubiquitination of target proteins, leading to their degradation by the proteasome. The sequence is that of BTB/POZ domain-containing protein KCTD9 (Kctd9) from Mus musculus (Mouse).